The sequence spans 473 residues: ATP synthase subunit beta (473 aa).

ATP is bound at residue 158–165 (GGAGVGKT).

It belongs to the ATPase alpha/beta chains family. F-type ATPases have 2 components, CF(1) - the catalytic core - and CF(0) - the membrane proton channel. CF(1) has five subunits: alpha(3), beta(3), gamma(1), delta(1), epsilon(1). CF(0) has three main subunits: a(1), b(2) and c(9-12). The alpha and beta chains form an alternating ring which encloses part of the gamma chain. CF(1) is attached to CF(0) by a central stalk formed by the gamma and epsilon chains, while a peripheral stalk is formed by the delta and b chains.

It localises to the cell membrane. It carries out the reaction ATP + H2O + 4 H(+)(in) = ADP + phosphate + 5 H(+)(out). Functionally, produces ATP from ADP in the presence of a proton gradient across the membrane. The catalytic sites are hosted primarily by the beta subunits. In Geobacillus thermoleovorans (Bacillus thermoleovorans), this protein is ATP synthase subunit beta.